We begin with the raw amino-acid sequence, 624 residues long: Probable potassium transport system protein Kup 2 (624 aa).

12 helical membrane passes run 14–34 (LSFA…LYAF), 51–71 (ILSL…LVIV), 97–117 (GGWL…DGML), 133–153 (LSPN…FFLF), 163–183 (IGVY…ILGF), 211–231 (SALF…ALFA), 245–265 (WFAV…AFVL), 283–303 (FLPV…QAII), 335–355 (VYLP…VVIF), 364–384 (AYGI…GIIA), 393–413 (FKIL…AGNI), and 416–436 (LLTG…VMYT).

Belongs to the HAK/KUP transporter (TC 2.A.72) family.

The protein localises to the cell inner membrane. The enzyme catalyses K(+)(in) + H(+)(in) = K(+)(out) + H(+)(out). Its function is as follows. Transport of potassium into the cell. Likely operates as a K(+):H(+) symporter. The chain is Probable potassium transport system protein Kup 2 from Legionella pneumophila (strain Lens).